The sequence spans 1988 residues: Sodium channel protein type 9 subunit alpha (1988 aa).

The Cytoplasmic segment spans residues 1 to 125 (MAMLPPPGPQ…RRISIKILVH (125 aa)). Positions 26-39 (RIAERKSKEPKEEK) are enriched in basic and acidic residues. The segment at 26 to 55 (RIAERKSKEPKEEKKDDDEEAPKPSSDLEA) is disordered. An I repeat occupies 112-410 (FSPLRRISIK…VAMAYEEQNQ (299 aa)). Residues 126–145 (SLFSMLIMCTILTNCIFMTM) form a helical membrane-spanning segment. The Extracellular segment spans residues 146 to 150 (NNPPD). A helical membrane pass occupies residues 151-172 (WTKNVEYTFTGIYTFESLVKIL). At 173 to 185 (ARGFCVGEFTFLR) the chain is on the cytoplasmic side. A helical transmembrane segment spans residues 186 to 204 (DPWNWLDFVVIVFAYLTEF). At 205-210 (VNLGNV) the chain is on the extracellular side. The N-linked (GlcNAc...) asparagine glycan is linked to N209. A helical transmembrane segment spans residues 211–227 (SALRTFRVLRALKTISV). The Cytoplasmic segment spans residues 228–241 (IPGLKTIVGALIQS). The helical transmembrane segment at 242–267 (VKKLSDVMILTVFCLSVFALIGLQLF) threads the bilayer. Over 268–346 (MGNLKHKCFR…PDYGYTSFDT (79 aa)) the chain is Extracellular. A disulfide bridge connects residues C275 and C324. An N-linked (GlcNAc...) asparagine glycan is attached at N283. Residues 347-363 (FSWAFLALFRLMTQDYW) constitute an intramembrane region (pore-forming). Topologically, residues 364–376 (ENLYQQTLRAAGK) are extracellular. A helical transmembrane segment spans residues 377 to 402 (TYMIFFVVVIFLGSFYLINLILAVVA). At 403–745 (MAYEEQNQAN…CIYFIVMDPF (343 aa)) the chain is on the cytoplasmic side. The span at 461–471 (SSSETSKLSSK) shows a compositional bias: low complexity. Disordered regions lie at residues 461 to 543 (SSSE…RGSL) and 565 to 611 (GSET…SPPM). Residues 474 to 486 (KERRNRRKKKNQK) show a composition bias toward basic residues. Composition is skewed to basic and acidic residues over residues 489 to 510 (SSGEEKGDAEKLSKSESEDSIR) and 573 to 585 (DEHSIFGDNESRR). Residues 726–989 (CSPYWIKFKK…EEDPDANNLQ (264 aa)) form an II repeat. A helical transmembrane segment spans residues 746 to 762 (VDLAITICIVLNTLFMA). Over 763 to 771 (MEHHPMTEE) the chain is Extracellular. A helical transmembrane segment spans residues 772-796 (FKNVLAIGNLVFTGIFAAEMVLKLI). Topologically, residues 797–805 (AMDPYEYFQ) are cytoplasmic. Residues 806–822 (VGWNIFDSLIVTLSLVE) form a helical membrane-spanning segment. Topologically, residues 823–831 (LFLADVEGL) are extracellular. Residues 832–848 (SVLRSFRLLRVFKLAKS) form a helical membrane-spanning segment. Residues 849 to 865 (WPTLNMLIKIIGNSVGA) lie on the Cytoplasmic side of the membrane. Residues 866–888 (LGNLTLVLAIIVFIFAVVGMQLF) traverse the membrane as a helical segment. Over 889–915 (GKSYKECVCKINDDCTLPRWHMNDFFH) the chain is Extracellular. A disulfide bond links C897 and C903. The pore-forming intramembrane region spans 916 to 928 (SFLIVFRVLCGEW). The Extracellular segment spans residues 929-940 (IETMWDCMEVAG). Cysteines 935 and 944 form a disulfide. Residues 941-967 (QAMCLIVYMMVMVIGNLVVLNLFLALL) traverse the membrane as a helical segment. Topologically, residues 968–1187 (LSSFSSDNLT…WWNIRKTCYK (220 aa)) are cytoplasmic. The segment at 1102–1148 (NAEELSSDSDSEYSKVRLNRSSSSECSTVDNPLPGEGEEAEAEPMNS) is disordered. Over residues 1120–1131 (NRSSSSECSTVD) the composition is skewed to polar residues. A compositionally biased stretch (acidic residues) spans 1137 to 1148 (EGEEAEAEPMNS). The stretch at 1180–1488 (NIRKTCYKIV…KKYYNAMKKL (309 aa)) is one III repeat. Residues 1188 to 1212 (IVEHSWFESFIVLMILLSSGALAFE) form a helical membrane-spanning segment. Over 1213-1224 (DIYIERKKTIKI) the chain is Extracellular. Residues 1225–1250 (ILEYADKIFTYIFILEMLLKWIAYGY) form a helical membrane-spanning segment. Topologically, residues 1251–1252 (KT) are cytoplasmic. A helical membrane pass occupies residues 1253–1278 (YFTNAWCWLDFLIVDVSLVTLVANTL). Residues 1279–1287 (GYSDLGPIK) are Extracellular-facing. A helical transmembrane segment spans residues 1288–1304 (SLRTLRALRPLRALSRF). Residues 1305 to 1317 (EGMRVVVNALIGA) are Cytoplasmic-facing. A helical transmembrane segment spans residues 1318-1342 (IPSIMNVLLVCLIFWLIFSIMGVNL). Over 1343–1394 (FAGKFYECINTTDGSRFPASQVPNRSECFALMNVSQNVRWKNLKVNFDNVGL) the chain is Extracellular. C1350 and C1370 form a disulfide bridge. N1352, N1366, and N1375 each carry an N-linked (GlcNAc...) asparagine glycan. The pore-forming intramembrane region spans 1395 to 1405 (GYLSLLQVATF). At 1406–1431 (KGWTIIMYAAVDSVNVDKQPKYEYSL) the chain is on the extracellular side. Residues 1432–1457 (YMYIYFVVFIIFGSFFTLNLFIGVII) traverse the membrane as a helical segment. Residues 1458–1514 (DNFNQQKKKLGGQDIFMTEEQKKYYNAMKKLGSKKPQKPIPRPGNKIQGCIFDLVTN) are Cytoplasmic-facing. S1490 bears the Phosphoserine; by PKC mark. The stretch at 1497 to 1795 (IPRPGNKIQG…WEKFDPDATQ (299 aa)) is one IV repeat. A helical membrane pass occupies residues 1515-1534 (QAFDISIMVLICLNMVTMMV). Topologically, residues 1535-1545 (EKEGQSQHMTE) are extracellular. The chain crosses the membrane as a helical span at residues 1546–1567 (VLYWINVVFIILFTGECVLKLI). Residues 1568 to 1576 (SLRHYYFTV) are Cytoplasmic-facing. The chain crosses the membrane as a helical span at residues 1577-1598 (GWNIFDFVVVIISIVGMFLADL). At 1599–1607 (IETYFVSPT) the chain is on the extracellular side. The chain crosses the membrane as a helical span at residues 1608 to 1627 (LFRVIRLARIGRILRLVKGA). Residues 1628–1640 (KGIRTLLFALMMS) are Cytoplasmic-facing. Residues 1641–1663 (LPALFNIGLLLFLVMFIYAIFGM) traverse the membrane as a helical segment. Residues 1664–1686 (SNFAYVKKEDGINDMFNFETFGN) lie on the Extracellular side of the membrane. The pore-forming intramembrane region spans 1687–1699 (SMICLFQITTSAG). The Extracellular segment spans residues 1700–1733 (WDGLLAPILNSKPPDCDPKKVHPGSSVEGDCGNP). A disulfide bridge links C1715 with C1730. The chain crosses the membrane as a helical span at residues 1734–1759 (SVGIFYFVSYIIISFLVVVNMYIAVI). Residues 1760-1988 (LENFSVATEE…KGKDSKESKK (229 aa)) are Cytoplasmic-facing. The 30-residue stretch at 1889–1918 (EDVSATVIQRAYRRYRLRQNVKNISSIYIK) folds into the IQ domain. Residues 1934 to 1988 (FDNVNENSSPEKTDATSSTTSPPSYDSVTKPDKEKYEQDRTEKEDKGKDSKESKK) form a disordered region. Over residues 1948–1961 (ATSSTTSPPSYDSV) the composition is skewed to low complexity. The segment covering 1962–1988 (TKPDKEKYEQDRTEKEDKGKDSKESKK) has biased composition (basic and acidic residues).

Belongs to the sodium channel (TC 1.A.1.10) family. Nav1.7/SCN9A subfamily. The Nav1.7 voltage-gated sodium channel consists of an ion-conducting alpha subunit SCN9A which is functional on its own regulated by one or more beta-1 (SCN1B), beta-2 (SCN2B), beta-3 (SCN3B) and beta-4 (SCN4B) subunits. SCN1B and SCN3B are non-covalently associated with SCN9A. SCN2B and SCN4B are disulfide-linked to SCN9A. SCN1B regulates channel inactivation. Interacts with NEDD4 and NEDD4L; regulates Nav1.7 activity most probably through ubiquitination and subsequent endocytosis. Interacts with TMEM233; modulates the gating properties of NaV1.7. Phosphorylation at Ser-1490 by PKC in a highly conserved cytoplasmic loop increases peak sodium currents. In terms of processing, ubiquitinated by NEDD4L; which may promote its endocytosis. Expressed strongly in dorsal root ganglion, with only minor levels elsewhere in the body, smooth muscle cells, MTC cell line and C-cell carcinoma. Also expressed in vagus nerves within the head and neck region. Isoform 1 is expressed preferentially in the central and peripheral nervous system. Isoform 2 is expressed preferentially in the dorsal root ganglion.

Its subcellular location is the cell membrane. The protein localises to the cell projection. It localises to the neuron projection. The protein resides in the axon. It carries out the reaction Na(+)(in) = Na(+)(out). With respect to regulation, inhibited by tetrodotoxin. Weakly inhibited by saxitoxin. Inhibited by the spider huwentoxin-IV that binds the extracellular loop S3-S4 of repeat II. Inhibited by the spider protoxin-II that binds the extracellular loop S3-S4 of repeats II and IV. Inhibited by the scorpion alpha-toxins CvIV4 and AaH2. Inhibited by the conotoxin GVIIJ. Inhibited by the spider beta/delta-theraphotoxin-Pre1a. Its function is as follows. Pore-forming subunit of Nav1.7, a voltage-gated sodium (Nav) channel that directly mediates the depolarizing phase of action potentials in excitable membranes. Navs, also called VGSCs (voltage-gated sodium channels) or VDSCs (voltage-dependent sodium channels), operate by switching between closed and open conformations depending on the voltage difference across the membrane. In the open conformation they allow Na(+) ions to selectively pass through the pore, along their electrochemical gradient. The influx of Na(+) ions provokes membrane depolarization, initiating the propagation of electrical signals throughout cells and tissues. Nav1.7 plays a crucial role in controlling the excitability and action potential propagation from nociceptor neurons, thereby contributing to the sensory perception of pain. The sequence is that of Sodium channel protein type 9 subunit alpha from Homo sapiens (Human).